We begin with the raw amino-acid sequence, 236 residues long: Lipoarabinomannan carrier protein LprG (236 aa).

An N-terminal signal peptide occupies residues 1–25 (MQTRPRFAVQSLFAILATAAALVAG). Residue cysteine 26 is the site of N-palmitoyl cysteine attachment. A lipid anchor (S-diacylglycerol cysteine) is attached at cysteine 26.

Belongs to the LppX/LprAFG lipoprotein family. Interacts with itself, Ag85A (MSMEG_6398), LppI (MSMEG_3851) and LppK (MSMEG_3904) in vivo.

It is found in the cell inner membrane. The protein resides in the secreted. It localises to the cell wall. Its function is as follows. Helps membrane protein MSMEG_3069/MSMEI_2992 (P55) transport triacylglycerides (TAG) across the inner cell membrane into the periplasm and probably ultimately to the outer membrane. Binds TAG in its hydrophobic cavity and transfers it between lipid bilayers. TAG probably regulates lipid metabolism and growth regulation and plays a structural role in the outer membrane. Also binds mannosides, lipoarabinomannan and lipomannan and various glycolipids in the same cavity. Required for MSMEG_3069/MSMEI_2992 export activity. Export of ethidium bromide by MSMEG_3069/MSMEI_2992 can be complemented by the equivalent operon from M.tuberculosis (lprG-Rv1410c). Involved in mycolylation. The polypeptide is Lipoarabinomannan carrier protein LprG (Mycolicibacterium smegmatis (strain ATCC 700084 / mc(2)155) (Mycobacterium smegmatis)).